Reading from the N-terminus, the 866-residue chain is MGFIYARKLLLCMAVSIYAIGSTTTTETTTSSSSTSGSGQSTSSGTTNSSSSPTTSPPTTSSSPPTSTHTSSPSSTSTQSSSTAATSSSAPSTASSTTSIPTSTSTETTTTTPTASTTTPTTTTAAPTTAATTTAVTTAASTSAETTTATATATSTPTTTTPTSTTTTTATTTVPTTASTTTDTTTAATTTAATTTAATTTAATTTAATTTAATTTAATTTAATTTAATTTAATTTAATTSSATTAATTSSTTTAATTTAATTTAATTTAATTTAATTTAATTTAATTTAATTTAATTTAATTTAATTTAATTTAATTTAATTTAATTTGSPTSGSTSTTGASTSTPSASTATSATPTSTSTSAAATTSTPTPTSAATSAESTTEAPTSTPTTDTTTPSEATTATTSPESTTVSASTTSATTTAFTTESHTSPDSSTGSTSTAEPSSTFTLTPSTATPSTDQFTGSSASTESDSTDSSTVPTTGTESITESSSTTEASTNLGSSTYESTEALETPDGNTTSGNTTPSPSPRTPSFADTQQTPDNGVSTQHTTINDHTTANAQKHAGHHRGRAGGRRGSPQGGSHTTPHPDRLTPSPDDTYDDDTNHPNGRNNSIEIVPQLPPDRPIIELGVATLRKNFMEASCTVETNSGLAIFWKIGNASVDAFNRGTTHTRLMRNGVPVYALVSTLRVPWLNVIPLTKITCAACPTNLVAGDGVDLNSCTTKSTTIPCPGQQRTHIFFSAKGDRAVCITSELVSQPTITWSVGSDRLRNDGFSQTWYGIQPGVCGILRSEVRIHRTTWRFGSTSKDYLCEVSASDSKTSDYKVLPNAHSTSNFALVAATTLTVTILCLLCCLYCMLTRPRASVY.

Positions methionine 1 to threonine 25 are cleaved as a signal peptide. 2 disordered regions span residues threonine 24–threonine 185 and threonine 319–glutamine 619. Asparagine 48 carries N-linked (GlcNAc...) asparagine; by host glycosylation. Positions threonine 319–threonine 442 are enriched in low complexity. Polar residues predominate over residues alanine 443–phenylalanine 463. Low complexity-rich tracts occupy residues threonine 464–threonine 499 and threonine 514–proline 526. Asparagine 518 carries N-linked (GlcNAc...) asparagine; by host glycosylation. A compositionally biased stretch (polar residues) spans phenylalanine 535–alanine 561. Positions histidine 564–glycine 574 are enriched in basic residues. Residues asparagine 611 and asparagine 659 are each glycosylated (N-linked (GlcNAc...) asparagine; by host). Residues phenylalanine 835 to tyrosine 855 traverse the membrane as a helical segment.

The protein resides in the virion membrane. In terms of biological role, virulence factor. The sequence is that of Glycoprotein gp2 from Equus caballus (Horse).